The primary structure comprises 882 residues: DNA mismatch repair protein MutS (882 aa).

Gly-629–Ser-636 is a binding site for ATP.

This sequence belongs to the DNA mismatch repair MutS family.

This protein is involved in the repair of mismatches in DNA. It is possible that it carries out the mismatch recognition step. This protein has a weak ATPase activity. This chain is DNA mismatch repair protein MutS, found in Ralstonia pickettii (strain 12J).